The sequence spans 342 residues: Tetraacyldisaccharide 4'-kinase (342 aa).

An ATP-binding site is contributed by 56-63 (TAGGAGKT).

This sequence belongs to the LpxK family.

It catalyses the reaction a lipid A disaccharide + ATP = a lipid IVA + ADP + H(+). Its pathway is glycolipid biosynthesis; lipid IV(A) biosynthesis; lipid IV(A) from (3R)-3-hydroxytetradecanoyl-[acyl-carrier-protein] and UDP-N-acetyl-alpha-D-glucosamine: step 6/6. Transfers the gamma-phosphate of ATP to the 4'-position of a tetraacyldisaccharide 1-phosphate intermediate (termed DS-1-P) to form tetraacyldisaccharide 1,4'-bis-phosphate (lipid IVA). The protein is Tetraacyldisaccharide 4'-kinase of Parvibaculum lavamentivorans (strain DS-1 / DSM 13023 / NCIMB 13966).